A 143-amino-acid polypeptide reads, in one-letter code: Large ribosomal subunit protein uL11 (143 aa).

Belongs to the universal ribosomal protein uL11 family. In terms of assembly, part of the ribosomal stalk of the 50S ribosomal subunit. Interacts with L10 and the large rRNA to form the base of the stalk. L10 forms an elongated spine to which L12 dimers bind in a sequential fashion forming a multimeric L10(L12)X complex. In terms of processing, one or more lysine residues are methylated.

In terms of biological role, forms part of the ribosomal stalk which helps the ribosome interact with GTP-bound translation factors. The chain is Large ribosomal subunit protein uL11 from Polynucleobacter necessarius subsp. necessarius (strain STIR1).